The primary structure comprises 324 residues: MTPLTLMNLMIMTLSYIIPILIAVAFLTLVERKILSYMQARKGPNIVGPFGLLQPIADGVKLFIKEPIRPSTSSPFLFIMTPILALLLALTIWIPLPLPFPMADLNLGLLFLLAMSSLTVYSLLWSGWASNSKYALIGALRAVAQTISYEVTLAIILLSTIMLSGNYTLSTLSITQEPIYLIFSSWPLAMMWYISTLAETNRAPFDLTEGESELVSGFNVEYAAGPFALFFLAEYANIMLMNTLTITLFLNPSFLNLPSELFSITLATKVLLLSSSFLWVRASYPRFRYDQLMHLLWKNFLPLTLALCLWHTSMPISYAGLPPA.

Helical transmembrane passes span 10 to 30, 76 to 96, 107 to 127, 143 to 163, 178 to 198, 229 to 249, 260 to 280, and 300 to 320; these read MIMT…LTLV, FLFI…WIPL, LGLL…LWSG, VAQT…TIML, PIYL…STLA, LFFL…ITLF, ELFS…FLWV, and FLPL…SYAG.

Belongs to the complex I subunit 1 family.

The protein localises to the mitochondrion inner membrane. The enzyme catalyses a ubiquinone + NADH + 5 H(+)(in) = a ubiquinol + NAD(+) + 4 H(+)(out). Functionally, core subunit of the mitochondrial membrane respiratory chain NADH dehydrogenase (Complex I) that is believed to belong to the minimal assembly required for catalysis. Complex I functions in the transfer of electrons from NADH to the respiratory chain. The immediate electron acceptor for the enzyme is believed to be ubiquinone. This chain is NADH-ubiquinone oxidoreductase chain 1 (MT-ND1), found in Excalfactoria chinensis (Blue-breasted quail).